We begin with the raw amino-acid sequence, 467 residues long: FAD-dependent oxidoreductase dbaF (467 aa).

Positions 1 to 20 (MKSVLASGALTLAFSLAALA) are cleaved as a signal peptide. 5 N-linked (GlcNAc...) asparagine glycosylation sites follow: asparagine 96, asparagine 134, asparagine 337, asparagine 391, and asparagine 451.

It belongs to the beta-cyclopiazonate dehydrogenase family. The cofactor is FAD.

It participates in secondary metabolite biosynthesis. FAD-dependent oxidoreductase; part of the gene cluster that mediates the biosynthesis of the antibiotic 2,4-dihydroxy-3-methyl-6-(2-oxopropyl)benzaldehyde (DHMBA) and its derivatives. The direct non-reducing polyketide synthase dbaI product is 2,4-dihydroxy-3-methyl-6-(2-oxopropyl)benzaldehyde (DHMBA), produced by condensation of one acetyl-CoA starter unit with 4 malonyl-CoA units and one methylation step. The FAD-dependent monooxygenase dbaH is responsible for the synthesis of yellow pigments derived from the oxidation of DHMBA. The roles of dbaB, C, E and F have still to be determined. This is FAD-dependent oxidoreductase dbaF from Emericella nidulans (strain FGSC A4 / ATCC 38163 / CBS 112.46 / NRRL 194 / M139) (Aspergillus nidulans).